Consider the following 444-residue polypeptide: U-box domain-containing protein 31 (444 aa).

The U-box domain occupies 59–133 (EIPSVFICPI…YTWFSQKYVL (75 aa)). ARM repeat units follow at residues 301 to 340 (KQVR…SLCL) and 343 to 382 (EGRI…SVCK).

It catalyses the reaction S-ubiquitinyl-[E2 ubiquitin-conjugating enzyme]-L-cysteine + [acceptor protein]-L-lysine = [E2 ubiquitin-conjugating enzyme]-L-cysteine + N(6)-ubiquitinyl-[acceptor protein]-L-lysine.. It functions in the pathway protein modification; protein ubiquitination. Its function is as follows. Functions as an E3 ubiquitin ligase. This chain is U-box domain-containing protein 31 (PUB31), found in Arabidopsis thaliana (Mouse-ear cress).